A 340-amino-acid chain; its full sequence is DNA-directed RNA polymerase subunit alpha (340 aa).

The interval 1-233 is alpha N-terminal domain (alpha-NTD); the sequence is MIRDEISVST…DLFIPFLRAE (233 aa). The tract at residues 268–340 is alpha C-terminal domain (alpha-CTD); that stretch reads AFKHIFIDQS…DLPKNKFQIH (73 aa).

It belongs to the RNA polymerase alpha chain family. In terms of assembly, in plastids the minimal PEP RNA polymerase catalytic core is composed of four subunits: alpha, beta, beta', and beta''. When a (nuclear-encoded) sigma factor is associated with the core the holoenzyme is formed, which can initiate transcription.

The protein localises to the plastid. The protein resides in the chloroplast. The catalysed reaction is RNA(n) + a ribonucleoside 5'-triphosphate = RNA(n+1) + diphosphate. In terms of biological role, DNA-dependent RNA polymerase catalyzes the transcription of DNA into RNA using the four ribonucleoside triphosphates as substrates. In Cycas taitungensis (Prince sago), this protein is DNA-directed RNA polymerase subunit alpha.